The chain runs to 246 residues: Myelin-oligodendrocyte glycoprotein (246 aa).

The signal sequence occupies residues 1 to 28 (MASLLSSSLPSCLPSLLFLLLQLTSSSA). The region spanning 29–144 (GQFRVIGPGH…EEAAMELKVE (116 aa)) is the Ig-like V-type domain. Residues 29–153 (GQFRVIGPGH…EDPFYWINPG (125 aa)) are Extracellular-facing. A disulfide bond links C52 and C126. Residue N59 is glycosylated (N-linked (GlcNAc...) asparagine). A helical transmembrane segment spans residues 154-174 (VLVLIAVLPVLLLQITVGLVF). At 175–209 (LCLQRRLRGKLWAEIENLHRTFDPHFLMVPCWKIT) the chain is on the cytoplasmic side. Residues 210–230 (LFVIVPVLGPLVALIICYNWL) form a helical membrane-spanning segment. Over 231 to 246 (HRRLAGQFLEELRNPF) the chain is Extracellular.

This sequence belongs to the immunoglobulin superfamily. BTN/MOG family. As to quaternary structure, homodimer. Found exclusively in the CNS, where it is localized on the surface of myelin and oligodendrocyte cytoplasmic membranes.

Its subcellular location is the membrane. In terms of biological role, mediates homophilic cell-cell adhesion. Minor component of the myelin sheath. May be involved in completion and/or maintenance of the myelin sheath and in cell-cell communication. This is Myelin-oligodendrocyte glycoprotein (MOG) from Bos taurus (Bovine).